Here is a 485-residue protein sequence, read N- to C-terminus: Probable serine/threonine-protein kinase nek1 (485 aa).

In terms of domain architecture, Protein kinase spans 12–283 (YLIKSQIGSG…TQQILEQVFI (272 aa)). ATP is bound by residues 18–26 (IGSGSYGNT) and Lys-41. Asp-136 functions as the Proton acceptor in the catalytic mechanism. Positions 354-365 (KNQQQQSPQKLE) are enriched in polar residues. The interval 354 to 419 (KNQQQQSPQK…NNDKNNNINN (66 aa)) is disordered. Low complexity predominate over residues 366–419 (NNNNNNNDNNNNNNNNNNNNNNNNNNNNNNNNNNNNNNNNNNNNNNDKNNNINN).

The protein belongs to the protein kinase superfamily. NEK Ser/Thr protein kinase family. NIMA subfamily.

The enzyme catalyses L-seryl-[protein] + ATP = O-phospho-L-seryl-[protein] + ADP + H(+). It carries out the reaction L-threonyl-[protein] + ATP = O-phospho-L-threonyl-[protein] + ADP + H(+). In Dictyostelium discoideum (Social amoeba), this protein is Probable serine/threonine-protein kinase nek1 (nek1).